The chain runs to 1263 residues: TBC1 domain family member 9B (1263 aa).

2 consecutive GRAM domains span residues 142–209 (LKMR…EKNA) and 288–356 (ECYR…EKAD). The residue at position 397 (T397) is a Phosphothreonine. Residues 397-449 (TPSKQTGSSIGGTKASVSDPAPESLPTPQEASEPPASPSSPLSSPPSFSTQEI) form a disordered region. S412, S433, S436, and S464 each carry phosphoserine. Positions 422-447 (PTPQEASEPPASPSSPLSSPPSFSTQ) are enriched in low complexity. Residues 509–696 (GIPESLRGEL…VIVDCFFYEG (188 aa)) enclose the Rab-GAP TBC domain. A helical transmembrane segment spans residues 669–689 (LSWFLTLFLSVMPFESAVVIV). The 36-residue stretch at 880 to 915 (HTPVLAGRMFRLLDQNKDSLINFKEFVTGMSGMYHG) folds into the EF-hand domain. 3 disordered regions span residues 977–1002 (EQQE…PDYR), 1075–1126 (TTKK…SGDM), and 1139–1159 (VEGG…DDET). Over residues 987-1002 (TPERREEKGTSPPDYR) the composition is skewed to basic and acidic residues. A Phosphoserine modification is found at S1254.

Its subcellular location is the membrane. Its function is as follows. May act as a GTPase-activating protein for Rab family protein(s). The protein is TBC1 domain family member 9B (Tbc1d9b) of Mus musculus (Mouse).